The chain runs to 174 residues: Male-enhanced antigen 1 (174 aa).

Disordered regions lie at residues 1–83 (MAAV…DGAA) and 95–123 (HLPDPPLESEDEDEEGAAALSSHSSIPMD). Acidic residues-rich tracts occupy residues 38–48 (SSEEPEEEQEE), 65–82 (PEQEEVELAPVGEGEDGA), and 101–110 (LESEDEDEEG). Position 103 is a phosphoserine (Ser-103).

In terms of tissue distribution, highly expressed in testis. Transcripts can be found in primary and secondary spermatocytes, and spermatids, but the protein itself is only detected in spermatids. No expression in Leydig cells, spermatogonia, or sperm. Very weak expression in the heart, kidney, spleen, thymus and ovary.

May play an important role in spermatogenesis and/or testis development. This is Male-enhanced antigen 1 (Mea1) from Mus musculus (Mouse).